An 852-amino-acid chain; its full sequence is Gamma-tubulin complex component 2 homolog (852 aa).

Ser73 bears the Phosphoserine mark.

This sequence belongs to the TUBGCP family. As to quaternary structure, gamma-tubulin small complex (Gamma TuSC) is a heterotetrameric complex which contains two molecules of gamma-tubulin, and one molecule each of Dgrip84 and Dgrip91. The gamma-tubulin in this complex binds preferentially to GDP over GTP.

Its subcellular location is the cytoplasm. It localises to the cytoskeleton. The protein localises to the microtubule organizing center. The protein resides in the centrosome. It is found in the perinuclear region. This is Gamma-tubulin complex component 2 homolog (Grip84) from Drosophila melanogaster (Fruit fly).